The following is a 191-amino-acid chain: ATP synthase subunit b (191 aa).

Residues 10–30 form a helical membrane-spanning segment; sequence FLVPGPTAIAELIVFLLILFI. Residues 170 to 191 form a disordered region; that stretch reads RAQRQPAASDVVGGQQREEVHR.

It belongs to the ATPase B chain family. F-type ATPases have 2 components, F(1) - the catalytic core - and F(0) - the membrane proton channel. F(1) has five subunits: alpha(3), beta(3), gamma(1), delta(1), epsilon(1). F(0) has three main subunits: a(1), b(2) and c(10-14). The alpha and beta chains form an alternating ring which encloses part of the gamma chain. F(1) is attached to F(0) by a central stalk formed by the gamma and epsilon chains, while a peripheral stalk is formed by the delta and b chains.

It is found in the cell membrane. Functionally, f(1)F(0) ATP synthase produces ATP from ADP in the presence of a proton or sodium gradient. F-type ATPases consist of two structural domains, F(1) containing the extramembraneous catalytic core and F(0) containing the membrane proton channel, linked together by a central stalk and a peripheral stalk. During catalysis, ATP synthesis in the catalytic domain of F(1) is coupled via a rotary mechanism of the central stalk subunits to proton translocation. Component of the F(0) channel, it forms part of the peripheral stalk, linking F(1) to F(0). In Acidothermus cellulolyticus (strain ATCC 43068 / DSM 8971 / 11B), this protein is ATP synthase subunit b.